A 395-amino-acid chain; its full sequence is Tyrosine--tRNA ligase (395 aa).

The 'HIGH' region signature appears at 42–51 (PTAPDIHLGH). Positions 226-230 (KMSKS) match the 'KMSKS' region motif. Lys-229 contributes to the ATP binding site. In terms of domain architecture, S4 RNA-binding spans 334 to 394 (IAISNLLKDA…GKRKFARITL (61 aa)).

The protein belongs to the class-I aminoacyl-tRNA synthetase family. TyrS type 2 subfamily. Homodimer.

Its subcellular location is the cytoplasm. The enzyme catalyses tRNA(Tyr) + L-tyrosine + ATP = L-tyrosyl-tRNA(Tyr) + AMP + diphosphate + H(+). In terms of biological role, catalyzes the attachment of tyrosine to tRNA(Tyr) in a two-step reaction: tyrosine is first activated by ATP to form Tyr-AMP and then transferred to the acceptor end of tRNA(Tyr). This chain is Tyrosine--tRNA ligase, found in Photobacterium profundum (strain SS9).